Here is a 578-residue protein sequence, read N- to C-terminus: A-type ATP synthase subunit A (578 aa).

228-235 (GPFGSGKT) is an ATP binding site.

It belongs to the ATPase alpha/beta chains family. In terms of assembly, has multiple subunits with at least A(3), B(3), C, D, E, F, H, I and proteolipid K(x).

It localises to the cell membrane. The enzyme catalyses ATP + H2O + 4 H(+)(in) = ADP + phosphate + 5 H(+)(out). Its function is as follows. Produces ATP from ADP in the presence of a proton gradient across the membrane. The archaeal alpha chain is a catalytic subunit. Functionally, component of the A-type ATP synthase that produces ATP from ADP in the presence of a proton gradient across the membrane. The A chain is the catalytic subunit. The sequence is that of A-type ATP synthase subunit A from Methanosarcina barkeri.